The following is a 151-amino-acid chain: UPF0208 membrane protein ESA_00924 (151 aa).

Transmembrane regions (helical) follow at residues Phe46–Leu65 and Leu69–Gly91.

This sequence belongs to the UPF0208 family.

The protein localises to the cell inner membrane. This is UPF0208 membrane protein ESA_00924 from Cronobacter sakazakii (strain ATCC BAA-894) (Enterobacter sakazakii).